The chain runs to 31 residues: Alcohol dehydrogenase 1 (31 aa).

Residue Cys-7 coordinates Zn(2+).

It belongs to the zinc-containing alcohol dehydrogenase family. Class-P subfamily. As to quaternary structure, homodimer. Zn(2+) serves as cofactor.

It is found in the cytoplasm. It carries out the reaction a primary alcohol + NAD(+) = an aldehyde + NADH + H(+). The enzyme catalyses a secondary alcohol + NAD(+) = a ketone + NADH + H(+). The chain is Alcohol dehydrogenase 1 from Catharanthus roseus (Madagascar periwinkle).